The primary structure comprises 428 residues: Adenylosuccinate synthetase (428 aa).

Residues 12–18 and 40–42 each bind GTP; these read GDEGKGK and GHT. Asp-13 functions as the Proton acceptor in the catalytic mechanism. Mg(2+)-binding residues include Asp-13 and Gly-40. Residues 13-16, 38-41, Thr-129, Arg-143, Gln-224, Thr-239, and Arg-303 contribute to the IMP site; these read DEGK and NAGH. His-41 acts as the Proton donor in catalysis. 299-305 serves as a coordination point for substrate; the sequence is VTTGRSR. GTP-binding positions include Arg-305, 331 to 333, and 413 to 415; these read KLD and GVG.

This sequence belongs to the adenylosuccinate synthetase family. In terms of assembly, homodimer. Mg(2+) serves as cofactor.

The protein localises to the cytoplasm. The catalysed reaction is IMP + L-aspartate + GTP = N(6)-(1,2-dicarboxyethyl)-AMP + GDP + phosphate + 2 H(+). The protein operates within purine metabolism; AMP biosynthesis via de novo pathway; AMP from IMP: step 1/2. In terms of biological role, plays an important role in the de novo pathway of purine nucleotide biosynthesis. Catalyzes the first committed step in the biosynthesis of AMP from IMP. In Saccharopolyspora erythraea (strain ATCC 11635 / DSM 40517 / JCM 4748 / NBRC 13426 / NCIMB 8594 / NRRL 2338), this protein is Adenylosuccinate synthetase.